Consider the following 491-residue polypeptide: Regulatory protein NPR5 (491 aa).

The region spanning 26–116 is the BTB domain; sequence SDVTFSVEGR…LYSGQVSIVP (91 aa). The segment at 122–136 adopts a C2HC NPR-type zinc-finger fold; that stretch reads RPNCGERGCWHTHCS. Positions 125, 130, 132, and 135 each coordinate Zn(2+). ANK repeat units follow at residues 254 to 283, 284 to 313, 318 to 347, and 351 to 385; these read QKIRRMRRALDSSDVELVKLMVMGEGLNLD, ESLALHYAVESCSREVVKALLELGAADVNY, AGKTPLHIAAEMVSPDMVAVLLDHHADPNV, and GGITPLDILRTLTSDFLFKGAVPGLTHIEPNKLRL. The interval 400-491 is disordered; it reads EEGNNSNNQN…MYHHHHQHHF (92 aa). Residues 403-413 show a composition bias toward low complexity; sequence NNSNNQNNDNN. Residues 457 to 470 are compositionally biased toward basic and acidic residues; sequence DQGDDHNSQREGMS.

The protein belongs to the plant 'ANKYRIN-BTB/POZ' family. 'NOOT-BOP-COCH-like' (NBCL) subfamily. Homodimer or heterodimer with BOP1. Interacts with PAN. Highly expressed in young floral meristem. Predominantly expressed in the boundary between floral meristem (FM) and sepal primordia.

It localises to the cytoplasm. The protein resides in the nucleus. Its pathway is protein modification; protein ubiquitination. Its function is as follows. May act as a substrate-specific adapter of an E3 ubiquitin-protein ligase complex (CUL3-RBX1-BTB) which mediates the ubiquitination and subsequent proteasomal degradation of target proteins. Acts redundantly with BOP2. BOP1/2 promote leaf and floral meristem fate and determinacy in a pathway targeting AP1 and AGL24. BOP1/2 act as transcriptional co-regulators through direct interaction with TGA factors, including PAN, a direct regulator of AP1. Controls lateral organ fate through positive regulation of adaxial-abaxial polarity genes ATHB-14/PHB, YAB1/FIL and YAB3, and through positive regulation of LOB domain-containing genes LOB, LBD6/AS2 and LBD36. Promotes and maintains a developmentally determinate state in leaf cells through the negative regulation of JAG, JGL and class I KNOX genes. Is also involved in nectary development, formation of normal abscission zones (AZs) and suppression of bract formation, probably by regulating the cell wall disorganization. The chain is Regulatory protein NPR5 from Arabidopsis thaliana (Mouse-ear cress).